The primary structure comprises 310 residues: Melanocyte-stimulating hormone receptor (310 aa).

At 1 to 37 (MPMQGAQRKLLGSLNSTPTATSNLGLAANRTGAPCLE) the chain is on the extracellular side. N-linked (GlcNAc...) asparagine glycosylation is present at asparagine 29. Residues 38 to 63 (LPIPDGLFLSLGLVSLVENVLVVAAI) traverse the membrane as a helical segment. Topologically, residues 64-72 (AKNRNLHSS) are cytoplasmic. Residues 73–93 (MYCFICCLALSDLLVSGSNML) traverse the membrane as a helical segment. Residues 94-110 (EAGVLATRASVVQQLHN) lie on the Extracellular side of the membrane. The chain crosses the membrane as a helical span at residues 111–132 (TIDVLTCSSMLCSLCFLGAIAV). Residues 133 to 155 (DRYISIFYALRYHSIMTLPRAQR) lie on the Cytoplasmic side of the membrane. Residues 156–175 (AVAAIWVASVLSSTLFITYY) traverse the membrane as a helical segment. The Extracellular portion of the chain corresponds to 176-183 (DHAAVLLC). A helical membrane pass occupies residues 184 to 203 (LVVFFLAMLVLMAVLYVHML). The Cytoplasmic segment spans residues 204 to 232 (AWACQHAQGIIRLHKRQPPAHKGFGLRGA). The helical transmembrane segment at 233–258 (ATLTILLGIFFLCWGPFFLRLTLVVF) threads the bilayer. At 259–271 (CPQHLTCNCIFKN) the chain is on the extracellular side. A helical transmembrane segment spans residues 272 to 292 (FKVFLTLIICNTIIDPLIYAF). Residues 293–310 (RSQELRRTLKEVLGRGRW) are Cytoplasmic-facing.

This sequence belongs to the G-protein coupled receptor 1 family. As to quaternary structure, interacts with MGRN1, but does not undergo MGRN1-mediated ubiquitination; this interaction competes with GNAS-binding and thus inhibits agonist-induced cAMP production. Interacts with OPN3; the interaction results in a decrease in MC1R-mediated cAMP signaling and ultimately a decrease in melanin production in melanocytes.

The protein localises to the cell membrane. In terms of biological role, receptor for MSH (alpha, beta and gamma) and ACTH. The activity of this receptor is mediated by G proteins which activate adenylate cyclase. Mediates melanogenesis, the production of eumelanin (black/brown) and phaeomelanin (red/yellow), via regulation of cAMP signaling in melanocytes. The polypeptide is Melanocyte-stimulating hormone receptor (MC1R) (Leontopithecus chrysomelas (Golden-headed lion tamarin)).